Consider the following 285-residue polypeptide: Polyamine aminopropyltransferase (285 aa).

The PABS domain occupies 5–241 (DNWYIEHFQP…GWWSVTMASK (237 aa)). Q35 provides a ligand contact to S-methyl-5'-thioadenosine. Residues H66 and D90 each coordinate spermidine. S-methyl-5'-thioadenosine contacts are provided by residues D110 and 141–142 (DG). Catalysis depends on D160, which acts as the Proton acceptor. 160–163 (DSTD) contributes to the spermidine binding site. P167 is an S-methyl-5'-thioadenosine binding site.

The protein belongs to the spermidine/spermine synthase family. As to quaternary structure, homodimer or homotetramer.

The protein localises to the cytoplasm. It catalyses the reaction S-adenosyl 3-(methylsulfanyl)propylamine + putrescine = S-methyl-5'-thioadenosine + spermidine + H(+). It participates in amine and polyamine biosynthesis; spermidine biosynthesis; spermidine from putrescine: step 1/1. Its function is as follows. Catalyzes the irreversible transfer of a propylamine group from the amino donor S-adenosylmethioninamine (decarboxy-AdoMet) to putrescine (1,4-diaminobutane) to yield spermidine. This is Polyamine aminopropyltransferase from Xanthomonas euvesicatoria pv. vesicatoria (strain 85-10) (Xanthomonas campestris pv. vesicatoria).